The sequence spans 142 residues: Large ribosomal subunit protein uL16 (142 aa).

The protein belongs to the universal ribosomal protein uL16 family. As to quaternary structure, part of the 50S ribosomal subunit.

Functionally, binds 23S rRNA and is also seen to make contacts with the A and possibly P site tRNAs. The chain is Large ribosomal subunit protein uL16 from Aquifex aeolicus (strain VF5).